A 2130-amino-acid chain; its full sequence is COPII coat assembly protein SEC16 (2130 aa).

3 stretches are compositionally biased toward basic and acidic residues: residues 27–38 (KILEKEPEHEPS), 50–72 (DDVK…KDDL), and 88–97 (EAIKKNKLDP). 9 disordered regions span residues 27 to 516 (KILE…TQNK), 532 to 585 (FLED…NDAY), 598 to 647 (PAAR…ATMS), 810 to 842 (QGAQ…SSLI), 1347 to 1366 (DESK…SPAV), 1374 to 1519 (DITS…NNGS), 1558 to 1731 (PSIS…TPSD), 1753 to 1997 (DTET…LGEK), and 2014 to 2130 (IPLE…LDQK). Polar residues predominate over residues 98 to 120 (QDQTAAGDSGRSQPDLSPRTTTG). Basic and acidic residues-rich tracts occupy residues 128 to 138 (ETKDTDGHDSA), 149 to 170 (DDNR…KSEL), 178 to 188 (EADKEETKDFD), and 199 to 216 (KAGK…EAKI). Polar residues-rich tracts occupy residues 267–279 (WESN…SSQA) and 293–335 (APSS…PSSQ). Positions 380–395 (DFLKEIQKQEESKDTD) are enriched in basic and acidic residues. A compositionally biased stretch (low complexity) spans 405–420 (TPSAQPSSQDQDTSQD). Residues 421-431 (MRNYSTTQTDI) show a composition bias toward polar residues. 2 stretches are compositionally biased toward basic and acidic residues: residues 447–481 (PKGE…HDFL) and 504–513 (ENKDSDKFET). Over residues 538-568 (TSQTQTLKSKSNKQTYLPSTTNPSTTPVVPT) the composition is skewed to low complexity. Residues 601 to 617 (RSTNKYAPGSSNHNSPP) are compositionally biased toward polar residues. Polar residues-rich tracts occupy residues 1374 to 1388 (DITS…TSPQ), 1399 to 1420 (VTTN…NGMS), 1428 to 1498 (LYSN…QSEN), 1505 to 1519 (YSAN…NNGS), and 1559 to 1574 (SISN…SNPI). Residues 1627–1640 (TESRESEKSSELRD) show a composition bias toward basic and acidic residues. Polar residues-rich tracts occupy residues 1701–1714 (SGGN…SSDK) and 1722–1731 (TSMLVDTPSD). Positions 1753–1779 (DTETLHDRNEVKEAPNQESIDTKEEAS) are enriched in basic and acidic residues. 2 stretches are compositionally biased toward polar residues: residues 1793–1803 (ASTSQSRNINV) and 1819–1839 (TSSL…NSFR). Residues 1840 to 1857 (TNEKESMFHPYQEGENKS) show a composition bias toward basic and acidic residues. Low complexity predominate over residues 1896–1911 (SSRLSQSQQSALYQQY). Acidic residues predominate over residues 1925-1935 (VDEEEDEDSED). 2 stretches are compositionally biased toward basic and acidic residues: residues 1936-1963 (ESSK…KQRQ) and 1981-1997 (RKND…LGEK). Composition is skewed to low complexity over residues 2039–2050 (SSSSISKPSSSS), 2061–2083 (APPA…RPSQ), and 2092–2104 (PSLA…DLLS).

Belongs to the SEC16 family.

Its subcellular location is the endoplasmic reticulum membrane. Functionally, involved in the initiation of assembly of the COPII coat required for the formation of transport vesicles from the endoplasmic reticulum (ER) and the selection of cargo molecules. Also involved in autophagy. The polypeptide is COPII coat assembly protein SEC16 (SEC16) (Debaryomyces hansenii (strain ATCC 36239 / CBS 767 / BCRC 21394 / JCM 1990 / NBRC 0083 / IGC 2968) (Yeast)).